We begin with the raw amino-acid sequence, 505 residues long: Putative thymidine phosphorylase (505 aa).

This sequence belongs to the thymidine/pyrimidine-nucleoside phosphorylase family. Type 2 subfamily.

The catalysed reaction is thymidine + phosphate = 2-deoxy-alpha-D-ribose 1-phosphate + thymine. This chain is Putative thymidine phosphorylase, found in Parvibaculum lavamentivorans (strain DS-1 / DSM 13023 / NCIMB 13966).